The chain runs to 145 residues: Immune protein Tsi4 (145 aa).

Transmembrane regions (helical) follow at residues 9 to 29 (IGGL…LLAG) and 109 to 129 (ALWG…IVGF).

The protein localises to the membrane. Immunity protein that plays a role in preventing early activation of toxin Tse4. This Pseudomonas aeruginosa (strain ATCC 15692 / DSM 22644 / CIP 104116 / JCM 14847 / LMG 12228 / 1C / PRS 101 / PAO1) protein is Immune protein Tsi4.